Reading from the N-terminus, the 142-residue chain is MFACAKLACTPSLIRAGSRVAYRPISASVLSRPEASRTGEGSTVFNGAQNGVSQLIQREFQTSAISRDIDTAAKFIGAGAATVGVAGSGAGIGTVFGSLIIGYARNPSLKQQLFSYAILGFALSEAMGLFCLMVAFLILFAM.

A mitochondrion-targeting transit peptide spans 1-67 (MFACAKLACT…REFQTSAISR (67 aa)). A helical transmembrane segment spans residues 83-103 (VGVAGSGAGIGTVFGSLIIGY). Lys110 bears the N6,N6,N6-trimethyllysine mark. Residues 118–138 (ILGFALSEAMGLFCLMVAFLI) form a helical membrane-spanning segment.

The protein belongs to the ATPase C chain family. F-type ATPases have 2 components, CF(1) - the catalytic core - and CF(0) - the membrane proton channel. CF(1) has five subunits: alpha(3), beta(3), gamma(1), delta(1), epsilon(1). CF(0) has three main subunits: a, b and c. Interacts with TMEM70 and TMEM242. Post-translationally, trimethylated by ATPSCKMT at Lys-110. Methylation is required for proper incorporation of the C subunit into the ATP synthase complex and mitochondrial respiration.

The protein resides in the mitochondrion membrane. Functionally, mitochondrial membrane ATP synthase (F(1)F(0) ATP synthase or Complex V) produces ATP from ADP in the presence of a proton gradient across the membrane which is generated by electron transport complexes of the respiratory chain. F-type ATPases consist of two structural domains, F(1) - containing the extramembraneous catalytic core and F(0) - containing the membrane proton channel, linked together by a central stalk and a peripheral stalk. During catalysis, ATP synthesis in the catalytic domain of F(1) is coupled via a rotary mechanism of the central stalk subunits to proton translocation. Part of the complex F(0) domain. A homomeric c-ring of probably 10 subunits is part of the complex rotary element. The chain is ATP synthase F(0) complex subunit C3, mitochondrial from Homo sapiens (Human).